The primary structure comprises 1488 residues: Chromosome partition protein MukB (1488 aa).

34 to 41 contacts ATP; the sequence is GGNGAGKS. 3 coiled-coil regions span residues 326–418, 444–472, and 509–602; these read LEAD…QYNQ, LDTFQAKEQEATEKLLSLEQKMSVAQTAH, and RHLA…QRAP. The segment at 666–783 is flexible hinge; the sequence is PGGAEDQRLN…SLPIFGRAAR (118 aa). 3 coiled-coil regions span residues 835-923, 977-1116, and 1209-1265; these read EAEI…AKLE, EMLS…AKAG, and VEAI…LQSV. The disordered stretch occupies residues 1049–1074; it reads ADSGAEERARQRRDELHAQLSNNRSR. The segment covering 1051–1065 has biased composition (basic and acidic residues); it reads SGAEERARQRRDELH.

The protein belongs to the SMC family. MukB subfamily. In terms of assembly, homodimerization via its hinge domain. Binds to DNA via its C-terminal region. Interacts, and probably forms a ternary complex, with MukE and MukF via its C-terminal region. The complex formation is stimulated by calcium or magnesium. Interacts with tubulin-related protein FtsZ.

The protein resides in the cytoplasm. The protein localises to the nucleoid. Functionally, plays a central role in chromosome condensation, segregation and cell cycle progression. Functions as a homodimer, which is essential for chromosome partition. Involved in negative DNA supercoiling in vivo, and by this means organize and compact chromosomes. May achieve or facilitate chromosome segregation by condensation DNA from both sides of a centrally located replisome during cell division. This chain is Chromosome partition protein MukB, found in Salmonella paratyphi A (strain ATCC 9150 / SARB42).